The primary structure comprises 154 residues: Anaerobic ribonucleoside-triphosphate reductase-activating protein (154 aa).

Cysteine 26, cysteine 30, and cysteine 33 together coordinate [4Fe-4S] cluster. S-adenosyl-L-methionine-binding positions include 32–34 and glycine 74; that span reads GCY.

The protein belongs to the organic radical-activating enzymes family. In terms of assembly, forms a tetramer composed of two NrdD and two NrdG subunits. [4Fe-4S] cluster serves as cofactor.

It localises to the cytoplasm. The catalysed reaction is glycyl-[protein] + reduced [flavodoxin] + S-adenosyl-L-methionine = glycin-2-yl radical-[protein] + semiquinone [flavodoxin] + 5'-deoxyadenosine + L-methionine + H(+). Functionally, activation of anaerobic ribonucleoside-triphosphate reductase under anaerobic conditions by generation of an organic free radical, using S-adenosylmethionine and reduced flavodoxin as cosubstrates to produce 5'-deoxy-adenosine. The sequence is that of Anaerobic ribonucleoside-triphosphate reductase-activating protein (nrdG) from Salmonella typhimurium (strain LT2 / SGSC1412 / ATCC 700720).